We begin with the raw amino-acid sequence, 143 residues long: 3-hydroxyacyl-[acyl-carrier-protein] dehydratase FabZ (143 aa).

H47 is an active-site residue.

Belongs to the thioester dehydratase family. FabZ subfamily.

The protein localises to the cytoplasm. It carries out the reaction a (3R)-hydroxyacyl-[ACP] = a (2E)-enoyl-[ACP] + H2O. Functionally, involved in unsaturated fatty acids biosynthesis. Catalyzes the dehydration of short chain beta-hydroxyacyl-ACPs and long chain saturated and unsaturated beta-hydroxyacyl-ACPs. In Rickettsia canadensis (strain McKiel), this protein is 3-hydroxyacyl-[acyl-carrier-protein] dehydratase FabZ.